We begin with the raw amino-acid sequence, 350 residues long: Anthranilate phosphoribosyltransferase (350 aa).

Residues Gly-88, 91-92 (GD), Thr-96, 98-101 (NIST), 116-124 (KHGGRSVSS), and Ser-128 contribute to the 5-phospho-alpha-D-ribose 1-diphosphate site. Residue Gly-88 participates in anthranilate binding. Ser-100 serves as a coordination point for Mg(2+). Arg-174 provides a ligand contact to anthranilate. Mg(2+) contacts are provided by Asp-233 and Glu-234.

This sequence belongs to the anthranilate phosphoribosyltransferase family. In terms of assembly, homodimer. It depends on Mg(2+) as a cofactor.

It carries out the reaction N-(5-phospho-beta-D-ribosyl)anthranilate + diphosphate = 5-phospho-alpha-D-ribose 1-diphosphate + anthranilate. It functions in the pathway amino-acid biosynthesis; L-tryptophan biosynthesis; L-tryptophan from chorismate: step 2/5. Its function is as follows. Catalyzes the transfer of the phosphoribosyl group of 5-phosphorylribose-1-pyrophosphate (PRPP) to anthranilate to yield N-(5'-phosphoribosyl)-anthranilate (PRA). The chain is Anthranilate phosphoribosyltransferase from Albidiferax ferrireducens (strain ATCC BAA-621 / DSM 15236 / T118) (Rhodoferax ferrireducens).